The sequence spans 439 residues: ATP-dependent RNA helicase RhlB (439 aa).

The Q motif motif lies at 9 to 37 (QKFADLPLCDEVKQALNENGFEHCTPIQA). A Helicase ATP-binding domain is found at 40 to 219 (LPVLLEKKDI…YDHMNDPVKV (180 aa)). 53–60 (AQTGTGKT) is a binding site for ATP. The short motif at 165–168 (DEAD) is the DEAD box element. Positions 243 to 390 (KLKLLHSLIE…VTSYDRDALI (148 aa)) constitute a Helicase C-terminal domain. The disordered stretch occupies residues 394–439 (PPVKIHRKPHAGGRNLRDRNGSPRPSGSHRSGSGRPPRHDRTRRHS). Residues 415–428 (SPRPSGSHRSGSGR) show a composition bias toward low complexity. Positions 429 to 439 (PPRHDRTRRHS) are enriched in basic residues.

The protein belongs to the DEAD box helicase family. RhlB subfamily. As to quaternary structure, component of the RNA degradosome, which is a multiprotein complex involved in RNA processing and mRNA degradation.

Its subcellular location is the cytoplasm. It catalyses the reaction ATP + H2O = ADP + phosphate + H(+). DEAD-box RNA helicase involved in RNA degradation. Has RNA-dependent ATPase activity and unwinds double-stranded RNA. The chain is ATP-dependent RNA helicase RhlB from Shewanella amazonensis (strain ATCC BAA-1098 / SB2B).